We begin with the raw amino-acid sequence, 361 residues long: POU domain, class 3, transcription factor 4 (361 aa).

2 disordered regions span residues 99-131 and 144-192; these read PHVAHHSPHTNHPNAWGASPAPNPSITSSGQPL and MLEH…PTSD. Residues 122–131 show a composition bias toward polar residues; the sequence is PSITSSGQPL. The segment covering 165-183 has biased composition (basic and acidic residues); the sequence is VLREPPDHGELGSHHCQDH. The region spanning 186–260 is the POU-specific domain; it reads EETPTSDELE…LLNKWLEEAD (75 aa). The residue at position 265 (Ser-265) is a Phosphoserine. The homeobox DNA-binding region spans 278–337; it reads KRKKRTSIEVSVKGVLETHFLKCPKPAAQEISSLADSLQLEKEVVRVWFCNRRQKEKRMT.

The protein belongs to the POU transcription factor family. Class-3 subfamily. Interacts with HNRNPU. In terms of tissue distribution, brain specific.

It is found in the nucleus. Functionally, probable transcription factor which exert its primary action widely during early neural development and in a very limited set of neurons in the mature brain. The polypeptide is POU domain, class 3, transcription factor 4 (POU3F4) (Homo sapiens (Human)).